A 115-amino-acid chain; its full sequence is Large ribosomal subunit protein uL22 (115 aa).

Belongs to the universal ribosomal protein uL22 family. As to quaternary structure, part of the 50S ribosomal subunit.

In terms of biological role, this protein binds specifically to 23S rRNA; its binding is stimulated by other ribosomal proteins, e.g. L4, L17, and L20. It is important during the early stages of 50S assembly. It makes multiple contacts with different domains of the 23S rRNA in the assembled 50S subunit and ribosome. The globular domain of the protein is located near the polypeptide exit tunnel on the outside of the subunit, while an extended beta-hairpin is found that lines the wall of the exit tunnel in the center of the 70S ribosome. This Endomicrobium trichonymphae protein is Large ribosomal subunit protein uL22.